The sequence spans 221 residues: Agamous-like MADS-box protein AGL14 (221 aa).

The MADS-box domain occupies arginine 3–phenylalanine 57. Positions serine 87–glycine 177 constitute a K-box domain.

Interacts with AGL16. Preferentially expressed in roots. Expressed in lateral root cap, root epidermis, root endodermis, columella of the root meristematic region, the vascular cylinder in differentiated zones of the primary root and in emerged lateral root primordia. Expressed in pollen.

The protein resides in the nucleus. Transcriptional activator that regulates root development by controlling meristem size and patterning of the root apical meristem. Regulates auxin transport and gradients in the root meristematic cells via direct regulation of the auxin efflux carrier PIN1 and PIN4 gene expression. Binds specifically to the CArG-box DNA sequences in the promoter regions of PIN1 and PIN4 genes. Involved in the regulation of shoot apical meristem (SAM) cell identities and transitions. Promotes flowering transition and participates in flower meristem maintenance and determinacy. Positively regulates TFL1 and WUS expression. Binds directly to the TFL1 regulatory sequences. The sequence is that of Agamous-like MADS-box protein AGL14 from Arabidopsis thaliana (Mouse-ear cress).